Reading from the N-terminus, the 391-residue chain is tRNA-specific 2-thiouridylase MnmA (391 aa).

ATP-binding positions include 20–27 (AMSGGVDS) and Leu46. Cys114 functions as the Nucleophile in the catalytic mechanism. Cys114 and Cys210 are oxidised to a cystine. An ATP-binding site is contributed by Gly138. Residues 160-162 (RDQ) form an interaction with tRNA region. Catalysis depends on Cys210, which acts as the Cysteine persulfide intermediate.

Belongs to the MnmA/TRMU family.

The protein localises to the cytoplasm. The enzyme catalyses S-sulfanyl-L-cysteinyl-[protein] + uridine(34) in tRNA + AH2 + ATP = 2-thiouridine(34) in tRNA + L-cysteinyl-[protein] + A + AMP + diphosphate + H(+). Catalyzes the 2-thiolation of uridine at the wobble position (U34) of tRNA, leading to the formation of s(2)U34. The sequence is that of tRNA-specific 2-thiouridylase MnmA from Bartonella bacilliformis (strain ATCC 35685 / KC583 / Herrer 020/F12,63).